Here is a 73-residue protein sequence, read N- to C-terminus: UPF0352 protein APJL_0577 (73 aa).

The protein belongs to the UPF0352 family.

In Actinobacillus pleuropneumoniae serotype 3 (strain JL03), this protein is UPF0352 protein APJL_0577.